The chain runs to 1407 residues: ABC transporter B family member 6 (1407 aa).

The interval 18-65 (LTPVSEVSEPPESPSPYLDPGAEHGGTGTAAQADDEEEMEEPEEMEPP) is disordered. The span at 50–63 (ADDEEEMEEPEEME) shows a compositional bias: acidic residues. A run of 4 helical transmembrane segments spans residues 84–104 (VLMV…IVYL), 139–159 (IVYI…CWIL), 212–231 (VGNY…IGFV), and 236–258 (IALI…NIFL). The region spanning 86–379 (MVFGSVAAAA…AATNFYSFDQ (294 aa)) is the ABC transmembrane type-1 1 domain. Asparagine 291 is a glycosylation site (N-linked (GlcNAc...) asparagine). Helical transmembrane passes span 310 to 330 (GILI…LAIC) and 351 to 371 (GEII…NQAA). Residues 412–647 (IEFRNVYFSY…GNLYAELLKC (236 aa)) form the ABC transporter 1 domain. 447–454 (GRNGSGKS) is an ATP binding site. N-linked (GlcNAc...) asparagine glycosylation is found at asparagine 449 and asparagine 663. Disordered regions lie at residues 670 to 696 (AERD…SLQR) and 709 to 815 (NSEE…DGQH). Residue asparagine 727 is glycosylated (N-linked (GlcNAc...) asparagine). Residues 733–755 (VGEKEPTIKRQDSFEMRLPELPK) show a composition bias toward basic and acidic residues. A compositionally biased stretch (polar residues) spans 761-770 (PQRQKSNGSD). Asparagine 767 carries an N-linked (GlcNAc...) asparagine glycan. The ABC transmembrane type-1 2 domain maps to 835–1123 (AVLGSIGAAI…PFGLAPYILK (289 aa)). The next 6 membrane-spanning stretches (helical) occupy residues 840–860 (IGAA…ALVV), 880–900 (LIIA…HFYF), 958–978 (IFIQ…LLGW), 982–1002 (LVAL…KLWL), 1061–1081 (IGFA…LLLW), and 1102–1122 (MVFS…PYIL). The ABC transporter 2 domain maps to 1158–1395 (IELKNIDFCY…NGLYVRLMQP (238 aa)). N-linked (GlcNAc...) asparagine glycosylation is present at asparagine 1178. 1193-1200 (GVSGSGKS) provides a ligand contact to ATP. N-linked (GlcNAc...) asparagine glycosylation is found at asparagine 1260 and asparagine 1346.

It belongs to the ABC transporter superfamily. ABCB family. Multidrug resistance exporter (TC 3.A.1.201) subfamily. Expressed in aerial tissues.

The protein localises to the membrane. The enzyme catalyses (indol-3-yl)acetate(in) + ATP + H2O = (indol-3-yl)acetate(out) + ADP + phosphate + H(+). Its function is as follows. Probable auxin efflux transporter that contributes, together with ABCB20 and in a FKBP42/TWD1-dependent manner, to the regulation of leaf position and morphology, internode distribution, roots development, and inflorescence organization, probably by modulating auxin repartition. This Arabidopsis thaliana (Mouse-ear cress) protein is ABC transporter B family member 6.